Reading from the N-terminus, the 291-residue chain is Ribosomal RNA small subunit methyltransferase A (291 aa).

S-adenosyl-L-methionine-binding residues include H37, L39, G64, E85, D110, and N131.

This sequence belongs to the class I-like SAM-binding methyltransferase superfamily. rRNA adenine N(6)-methyltransferase family. RsmA subfamily.

The protein resides in the cytoplasm. The catalysed reaction is adenosine(1518)/adenosine(1519) in 16S rRNA + 4 S-adenosyl-L-methionine = N(6)-dimethyladenosine(1518)/N(6)-dimethyladenosine(1519) in 16S rRNA + 4 S-adenosyl-L-homocysteine + 4 H(+). Its function is as follows. Specifically dimethylates two adjacent adenosines (A1518 and A1519) in the loop of a conserved hairpin near the 3'-end of 16S rRNA in the 30S particle. May play a critical role in biogenesis of 30S subunits. The sequence is that of Ribosomal RNA small subunit methyltransferase A from Dehalococcoides mccartyi (strain ATCC BAA-2100 / JCM 16839 / KCTC 5957 / BAV1).